The chain runs to 419 residues: Argininosuccinate synthase (419 aa).

9 to 17 is a binding site for ATP; it reads AYSGGLDTS. Residue Tyr-87 participates in L-citrulline binding. Gly-117 is a binding site for ATP. Residues Thr-119, Asn-123, and Asp-124 each contribute to the L-aspartate site. Asn-123 lines the L-citrulline pocket. Arg-127, Ser-175, Ser-184, Glu-260, and Tyr-272 together coordinate L-citrulline.

Belongs to the argininosuccinate synthase family. Type 1 subfamily. Homotetramer.

The protein resides in the cytoplasm. It catalyses the reaction L-citrulline + L-aspartate + ATP = 2-(N(omega)-L-arginino)succinate + AMP + diphosphate + H(+). The protein operates within amino-acid biosynthesis; L-arginine biosynthesis; L-arginine from L-ornithine and carbamoyl phosphate: step 2/3. This chain is Argininosuccinate synthase, found in Brevibacillus brevis (strain 47 / JCM 6285 / NBRC 100599).